Reading from the N-terminus, the 445-residue chain is Probable protein phosphatase 2C 14 (445 aa).

The region spanning 120–440 (GFGVVSRNGK…DDITVVIIDL (321 aa)) is the PPM-type phosphatase domain. The Mn(2+) site is built by Asp156, Gly157, and Asp318. Positions 384 to 404 (NSENESPSLNREIGSSPSKSP) are disordered. Residues 390-404 (PSLNREIGSSPSKSP) show a composition bias toward polar residues. Asp431 contacts Mn(2+).

Belongs to the PP2C family. It depends on Mg(2+) as a cofactor. Mn(2+) is required as a cofactor.

It catalyses the reaction O-phospho-L-seryl-[protein] + H2O = L-seryl-[protein] + phosphate. The enzyme catalyses O-phospho-L-threonyl-[protein] + H2O = L-threonyl-[protein] + phosphate. The polypeptide is Probable protein phosphatase 2C 14 (Arabidopsis thaliana (Mouse-ear cress)).